The chain runs to 678 residues: Glutamate--cysteine ligase (678 aa).

The protein belongs to the glutamate--cysteine ligase type 3 family.

It catalyses the reaction L-cysteine + L-glutamate + ATP = gamma-L-glutamyl-L-cysteine + ADP + phosphate + H(+). It participates in sulfur metabolism; glutathione biosynthesis; glutathione from L-cysteine and L-glutamate: step 1/2. Feedback inhibition by glutathione. Catalyzes the ATP-dependent condensation of cysteine and glutamate to form the dipeptide gamma-glutamylcysteine (gamma-GC), the first and rate-limiting step in the production of glutathione (GSH). This Saccharomyces cerevisiae (strain ATCC 204508 / S288c) (Baker's yeast) protein is Glutamate--cysteine ligase (GSH1).